The following is a 376-amino-acid chain: Thymidine kinase (376 aa).

The segment at 1–38 is disordered; sequence MASYPCHQHASAFDQAARSRGHNNRRTALRPRRQQKAT. Positions 19–35 are enriched in basic residues; sequence SRGHNNRRTALRPRRQQ. Residue 56-63 participates in ATP binding; the sequence is GPHGMGKT. E83 (proton acceptor) is an active-site residue. Y101 and Q125 together coordinate substrate. R216 lines the ATP pocket. R222 contributes to the substrate binding site.

Belongs to the herpesviridae thymidine kinase family. In terms of assembly, homodimer.

The catalysed reaction is thymidine + ATP = dTMP + ADP + H(+). Its function is as follows. Catalyzes the transfer of the gamma-phospho group of ATP to thymidine to generate dTMP in the salvage pathway of pyrimidine synthesis. The dTMP serves as a substrate for DNA polymerase during viral DNA replication. Allows the virus to be reactivated and to grow in non-proliferative cells lacking a high concentration of phosphorylated nucleic acid precursors. This is Thymidine kinase from Homo sapiens (Human).